The sequence spans 974 residues: Alpha-1,4 glucan phosphorylase L-2 isozyme, chloroplastic/amyloplastic (974 aa).

Residues 1 to 81 (MATFAVSGLN…LDVFQPDSTS (81 aa)) constitute a chloroplast transit peptide. The disordered stretch occupies residues 509–551 (ADVEKAADEEQEEEGKDDSKDEETEAVKAETTNEEEETEVKKV). The span at 517 to 532 (EEQEEEGKDDSKDEET) shows a compositional bias: acidic residues. K820 is modified (N6-(pyridoxal phosphate)lysine).

Belongs to the glycogen phosphorylase family. Pyridoxal 5'-phosphate is required as a cofactor. Leaves.

It is found in the plastid. The protein resides in the chloroplast. The protein localises to the amyloplast. The catalysed reaction is [(1-&gt;4)-alpha-D-glucosyl](n) + phosphate = [(1-&gt;4)-alpha-D-glucosyl](n-1) + alpha-D-glucose 1-phosphate. Functionally, phosphorylase is an important allosteric enzyme in carbohydrate metabolism. Enzymes from different sources differ in their regulatory mechanisms and in their natural substrates. However, all known phosphorylases share catalytic and structural properties. The polypeptide is Alpha-1,4 glucan phosphorylase L-2 isozyme, chloroplastic/amyloplastic (STP-1) (Solanum tuberosum (Potato)).